Consider the following 603-residue polypeptide: Probable methyltransferase-like protein 25 (603 aa).

Positions 326-352 (TSSQQIPNRETSEANKERRKMTSKSSE) are disordered.

Probable methyltransferase. In Homo sapiens (Human), this protein is Probable methyltransferase-like protein 25 (METTL25).